Here is a 1216-residue protein sequence, read N- to C-terminus: DNA polymerase subunit gamma-1 (1216 aa).

Low complexity predominate over residues 27 to 37; that stretch reads SSSVLDPVPSD. Positions 27-50 are disordered; sequence SSSVLDPVPSDGQPQSQMPSSENG. The segment covering 38-50 has biased composition (polar residues); the sequence is GQPQSQMPSSENG. Positions 179–183 match the Exo I motif; that stretch reads VFDVE. The active-site Exonuclease activity is aspartate 181. An Exo II motif is present at residues 250 to 258; that stretch reads VGHNVSFDR. Serine 289 serves as a coordination point for DNA. The segment covering 301 to 314 has biased composition (basic residues); the sequence is GKHKTQHPTKRGQK. Positions 301–321 are disordered; that stretch reads GKHKTQHPTKRGQKSQKNANG. Positions 377–385 match the Exo III motif; sequence YCARDVWAT. Residues 488 to 518 form a disordered region; that stretch reads TASASKLPIEGAGPFGDPMDQEDPGPPSEEE. Positions 491–552 are accessory-interacting determinant; the sequence is ASKLPIEGAG…RPQHLPGHPG (62 aa). Positions 506–518 are enriched in acidic residues; that stretch reads MDQEDPGPPSEEE. Arginine 560 is an RNA binding site. Residue serine 574 coordinates DNA. Histidine 731, glycine 740, and lysine 745 together coordinate RNA. Lysine 783 and threonine 826 together coordinate DNA. Residues 835–841 form a trigger loop region; that stretch reads TWLTASN. Serine 840 and arginine 846 together coordinate RNA. The Pol A motif lies at 864–873; sequence VGADVDSQEL. Residues aspartate 867, valine 868, serine 870, glutamate 872, arginine 920, lysine 924, and tyrosine 928 each contribute to the a 2'-deoxyribonucleoside 5'-triphosphate site. Aspartate 867 and valine 868 together coordinate Mg(2+). A Pol B motif is present at residues 920 to 935; sequence REHAKVFNYGRIYGAG. DNA contacts are provided by threonine 1071 and serine 1072. Positions 1111–1118 match the Pol C motif; sequence HDEVRYLV. Position 1112 (aspartate 1112) interacts with a 2'-deoxyribonucleoside 5'-triphosphate. Aspartate 1112 is a Mg(2+) binding site.

It belongs to the DNA polymerase type-A family. As to quaternary structure, heterotrimer composed of a catalytic subunit and a homodimer of accessory subunits (POLG:POLG2). Interacts with TTC3. Interacts with LIG3. It depends on Mg(2+) as a cofactor.

It is found in the mitochondrion. Its subcellular location is the mitochondrion matrix. It localises to the mitochondrion nucleoid. The enzyme catalyses DNA(n) + a 2'-deoxyribonucleoside 5'-triphosphate = DNA(n+1) + diphosphate. It catalyses the reaction a 3'-end 2'-deoxyribonucleotidyl-deoxyribonucleotide-DNA + H2O = a 3'-end 2'-deoxyribonucleotide-DNA + a 2'-deoxyribonucleoside 5'-phosphate + H(+). The catalysed reaction is a 5'-end 2'-deoxyribose-2'-deoxyribonucleotide-DNA = (2E,4S)-4-hydroxypenten-2-al-5-phosphate + a 5'-end 5'-phospho-2'-deoxyribonucleoside-DNA + H(+). With respect to regulation, inhibited by dideoxynucleotides such as antiviral agent zalcitabine. Catalytic subunit of DNA polymerase gamma solely responsible for replication of mitochondrial DNA (mtDNA). Replicates both heavy and light strands of the circular mtDNA genome using a single-stranded DNA template, RNA primers and the four deoxyribonucleoside triphosphates as substrates. Has 5' -&gt; 3' polymerase activity. Functionally interacts with TWNK and SSBP1 at the replication fork to form a highly processive replisome, where TWNK unwinds the double-stranded DNA template prior to replication and SSBP1 covers the parental heavy strand to enable continuous replication of the entire mitochondrial genome. A single nucleotide incorporation cycle includes binding of the incoming nucleotide at the insertion site, a phosphodiester bond formation reaction that extends the 3'-end of the primer DNA, and translocation of the primer terminus to the post-insertion site. After completing replication of a mtDNA strand, mediates 3' -&gt; 5' exonucleolytic degradation at the nick to enable proper ligation. Highly accurate due to high nucleotide selectivity and 3' -&gt; 5' exonucleolytic proofreading. Proficiently corrects base substitutions, single-base additions and deletions in non-repetitive sequences and short repeats, but displays lower proofreading activity when replicating longer homopolymeric stretches. Exerts exonuclease activity toward single-stranded DNA and double-stranded DNA containing 3'-terminal mispairs. When a misincorporation occurs, transitions from replication to a pro-nucleolytic editing mode and removes the missincorporated nucleoside in the exonuclease active site. Proceeds via an SN2 nucleolytic mechanism in which Asp-198 catalyzes phosphodiester bond hydrolysis and Glu-200 stabilizes the leaving group. As a result the primer strand becomes one nucleotide shorter and is positioned in the post-insertion site, ready to resume DNA synthesis. Exerts 5'-deoxyribose phosphate (dRP) lyase activity and mediates repair-associated mtDNA synthesis (gap filling) in base-excision repair pathway. Catalyzes the release of the 5'-terminal 2-deoxyribose-5-phosphate sugar moiety from incised apurinic/apyrimidinic (AP) sites to produce a substrate for DNA ligase. The dRP lyase reaction does not require divalent metal ions and likely proceeds via a Schiff base intermediate in a beta-elimination reaction mechanism. This Rattus norvegicus (Rat) protein is DNA polymerase subunit gamma-1.